The primary structure comprises 118 residues: DNA polymerase epsilon subunit 4 (118 aa).

Composition is skewed to low complexity over residues 1–11 and 19–35; these read MAAAAAAGSGT and GGEA…SAPG. Residues 1–37 are disordered; it reads MAAAAAAGSGTPREEEAPGGEAAASQAQAPTSAPGGV. Position 2 is an N-acetylalanine (Ala2). Position 11 is a phosphothreonine (Thr11). Ser25 is subject to Phosphoserine.

In terms of assembly, component of the DNA polymerase epsilon complex consisting of four subunits: the catalytic subunit POLE and the accessory subunits POLE2, POLE3 and POLE4. Interaction with POLE3 is a prerequisite for further binding with POLE and POLE2.

The protein localises to the nucleus. Functionally, accessory component of the DNA polymerase epsilon complex. Participates in DNA repair and in chromosomal DNA replication. The chain is DNA polymerase epsilon subunit 4 (Pole4) from Mus musculus (Mouse).